A 734-amino-acid polypeptide reads, in one-letter code: MALRFPRFSQGLAQDPTTRRIWFGIATAHDFESHDDITEERLYQNIFASHFGQLAIIFLWTSGNLFHVAWQGNFEAWVQDPLHVRPIAHAIWDPHFGQPAVEAFTRGGALGPVNIAYSGVYQWWYTIGLRTNEDLYTGALFLLFLSAISLIAGWLHLQPKWKPSVSWFKNAESRLNHHLSGLFGVSSLAWTGHLVHVAIPASRGEYVRWNNFLDVLPHPRGLGPLFTGQWNLYAQNPDSNSHFFGTSQGSGTAILTLLGGFHPQTQSLWLTDIAHHHLAIAFLFLVAGHMYRTNFGIGHSIKDLLEAHIPPGGRLGRGHKGLYDTINNSIHFQLGLALASLGVITSLVAQHMYSLPAYAFIAQDFTTQAALYTHHQYIAGFIMTGAFAHGAIFFIRDYNPEQNEDNVLARMLDHKEAIISHLSWVSLFLGFHTLGLYVHNDVMLAFGTPEKQILIEPIFAQWIQSAHGKTSYGFDVLLSSTNSPAFIAGRSIWLPGWLNAINENSNSLFLKIGPGDFLVHHAIALGLHTTTLILVKGALDARGSKLMPDKKDFGYSFPCDGPGRGGTCDISAWDAFYLAVFWMLNTIGWVTFYWHWKHITLWQGNVSQFNESSTYLMGWLRDYLWLNSSQLINGYNPFGMNSLSVWAWMFLFGHLVWATGFMFLISWRGYWQELIETLAWAHERTPLANLIRWRDKPVALSIVQARLVGLAHFSVGYIFTYAAFLIASTSGKFG.

The next 8 membrane-spanning stretches (helical) occupy residues 46–69 (IFASHFGQLAIIFLWTSGNLFHVA), 135–158 (LYTGALFLLFLSAISLIAGWLHLQ), 175–199 (LNHHLSGLFGVSSLAWTGHLVHVAI), 273–291 (IAHHHLAIAFLFLVAGHMY), 330–353 (IHFQLGLALASLGVITSLVAQHMY), 369–395 (AALYTHHQYIAGFIMTGAFAHGAIFFI), 417–439 (AIISHLSWVSLFLGFHTLGLYVH), and 517–535 (FLVHHAIALGLHTTTLILV). Cysteine 559 and cysteine 568 together coordinate [4Fe-4S] cluster. A run of 2 helical transmembrane segments spans residues 575–596 (AFYLAVFWMLNTIGWVTFYWHW) and 643–665 (LSVWAWMFLFGHLVWATGFMFLI). Positions 654, 662, and 670 each coordinate chlorophyll a. Position 671 (tryptophan 671) interacts with phylloquinone. A helical transmembrane segment spans residues 707-727 (LVGLAHFSVGYIFTYAAFLIA).

Belongs to the PsaA/PsaB family. In terms of assembly, the PsaA/B heterodimer binds the P700 chlorophyll special pair and subsequent electron acceptors. PSI consists of a core antenna complex that captures photons, and an electron transfer chain that converts photonic excitation into a charge separation. The eukaryotic PSI reaction center is composed of at least 11 subunits. It depends on P700 is a chlorophyll a/chlorophyll a' dimer, A0 is one or more chlorophyll a, A1 is one or both phylloquinones and FX is a shared 4Fe-4S iron-sulfur center. as a cofactor.

Its subcellular location is the plastid. It localises to the chloroplast thylakoid membrane. It catalyses the reaction reduced [plastocyanin] + hnu + oxidized [2Fe-2S]-[ferredoxin] = oxidized [plastocyanin] + reduced [2Fe-2S]-[ferredoxin]. Its function is as follows. PsaA and PsaB bind P700, the primary electron donor of photosystem I (PSI), as well as the electron acceptors A0, A1 and FX. PSI is a plastocyanin-ferredoxin oxidoreductase, converting photonic excitation into a charge separation, which transfers an electron from the donor P700 chlorophyll pair to the spectroscopically characterized acceptors A0, A1, FX, FA and FB in turn. Oxidized P700 is reduced on the lumenal side of the thylakoid membrane by plastocyanin. The sequence is that of Photosystem I P700 chlorophyll a apoprotein A2 from Pelargonium hortorum (Common geranium).